A 309-amino-acid chain; its full sequence is Golgi-associated RAB2 interactor protein 1A (309 aa).

3 positions are modified to phosphoserine: Ser-231, Ser-263, and Ser-267.

Belongs to the GARIN family. In terms of assembly, interacts (via N-terminus) with RAB2B (in GTP-bound form).

It is found in the golgi apparatus. In terms of biological role, RAB2B effector protein required for accurate acrosome formation and normal male fertility. The polypeptide is Golgi-associated RAB2 interactor protein 1A (Homo sapiens (Human)).